Reading from the N-terminus, the 455-residue chain is Bifunctional protein GlmU (455 aa).

The tract at residues M1–R228 is pyrophosphorylase. UDP-N-acetyl-alpha-D-glucosamine is bound by residues L8–G11, K22, Q73, and G78–T79. Position 103 (D103) interacts with Mg(2+). The UDP-N-acetyl-alpha-D-glucosamine site is built by G140, E154, N169, and N226. N226 provides a ligand contact to Mg(2+). The segment at A229 to N249 is linker. The segment at G250 to K455 is N-acetyltransferase. The UDP-N-acetyl-alpha-D-glucosamine site is built by R331 and K349. H361 functions as the Proton acceptor in the catalytic mechanism. UDP-N-acetyl-alpha-D-glucosamine is bound by residues Y364 and N375. Acetyl-CoA-binding positions include N384–Y385, A421, and R438.

In the N-terminal section; belongs to the N-acetylglucosamine-1-phosphate uridyltransferase family. It in the C-terminal section; belongs to the transferase hexapeptide repeat family. In terms of assembly, homotrimer. Mg(2+) is required as a cofactor.

The protein localises to the cytoplasm. It catalyses the reaction alpha-D-glucosamine 1-phosphate + acetyl-CoA = N-acetyl-alpha-D-glucosamine 1-phosphate + CoA + H(+). It carries out the reaction N-acetyl-alpha-D-glucosamine 1-phosphate + UTP + H(+) = UDP-N-acetyl-alpha-D-glucosamine + diphosphate. It functions in the pathway nucleotide-sugar biosynthesis; UDP-N-acetyl-alpha-D-glucosamine biosynthesis; N-acetyl-alpha-D-glucosamine 1-phosphate from alpha-D-glucosamine 6-phosphate (route II): step 2/2. It participates in nucleotide-sugar biosynthesis; UDP-N-acetyl-alpha-D-glucosamine biosynthesis; UDP-N-acetyl-alpha-D-glucosamine from N-acetyl-alpha-D-glucosamine 1-phosphate: step 1/1. Its pathway is bacterial outer membrane biogenesis; LPS lipid A biosynthesis. Functionally, catalyzes the last two sequential reactions in the de novo biosynthetic pathway for UDP-N-acetylglucosamine (UDP-GlcNAc). The C-terminal domain catalyzes the transfer of acetyl group from acetyl coenzyme A to glucosamine-1-phosphate (GlcN-1-P) to produce N-acetylglucosamine-1-phosphate (GlcNAc-1-P), which is converted into UDP-GlcNAc by the transfer of uridine 5-monophosphate (from uridine 5-triphosphate), a reaction catalyzed by the N-terminal domain. The polypeptide is Bifunctional protein GlmU (Clostridium botulinum (strain Eklund 17B / Type B)).